Reading from the N-terminus, the 109-residue chain is SIAFSRAVFTEFLATLLFVFFGLGSALNWPQALPSVLQIAMAFGLAIGTLVQMLGHISGAHINPAVTVACLVGCHISFLRAAFYVAAQLLGAVAGAALLHEVTPPSIRG.

Residues 1–6 (SIAFSR) are Cytoplasmic-facing. The chain crosses the membrane as a helical span at residues 7–27 (AVFTEFLATLLFVFFGLGSAL). Residues 28–35 (NWPQALPS) are Extracellular-facing. The chain crosses the membrane as a helical span at residues 36–54 (VLQIAMAFGLAIGTLVQML). The Cytoplasmic portion of the chain corresponds to 55 to 59 (GHISG). Positions 60-69 (AHINPAVTVA) form an intramembrane region, discontinuously helical. Positions 63 to 65 (NPA) match the NPA 1 motif. Over 70 to 80 (CLVGCHISFLR) the chain is Cytoplasmic. Residues 81 to 102 (AAFYVAAQLLGAVAGAALLHEV) traverse the membrane as a helical segment. The Extracellular segment spans residues 103–109 (TPPSIRG).

Belongs to the MIP/aquaporin (TC 1.A.8) family. As to quaternary structure, homotetramer. Post-translationally, serine phosphorylation is necessary and sufficient for expression at the apical membrane. Endocytosis is not phosphorylation-dependent. N-glycosylated.

The protein resides in the apical cell membrane. The protein localises to the basolateral cell membrane. It is found in the cell membrane. Its subcellular location is the cytoplasmic vesicle membrane. It localises to the golgi apparatus. The protein resides in the trans-Golgi network membrane. The catalysed reaction is H2O(in) = H2O(out). It catalyses the reaction glycerol(in) = glycerol(out). In terms of biological role, forms a water-specific channel that provides the plasma membranes of renal collecting duct with high permeability to water, thereby permitting water to move in the direction of an osmotic gradient. Plays an essential role in renal water homeostasis. Could also be permeable to glycerol. This Erinaceus europaeus (Western European hedgehog) protein is Aquaporin-2.